The following is a 177-amino-acid chain: Large ribosomal subunit protein uL6 (177 aa).

This sequence belongs to the universal ribosomal protein uL6 family. As to quaternary structure, part of the 50S ribosomal subunit.

This protein binds to the 23S rRNA, and is important in its secondary structure. It is located near the subunit interface in the base of the L7/L12 stalk, and near the tRNA binding site of the peptidyltransferase center. In Rhodospirillum rubrum (strain ATCC 11170 / ATH 1.1.1 / DSM 467 / LMG 4362 / NCIMB 8255 / S1), this protein is Large ribosomal subunit protein uL6.